An 81-amino-acid chain; its full sequence is Large ribosomal subunit protein uL24 (81 aa).

Belongs to the universal ribosomal protein uL24 family. In terms of assembly, part of the 50S ribosomal subunit.

In terms of biological role, one of two assembly initiator proteins, it binds directly to the 5'-end of the 23S rRNA, where it nucleates assembly of the 50S subunit. Functionally, one of the proteins that surrounds the polypeptide exit tunnel on the outside of the subunit. This Chloroherpeton thalassium (strain ATCC 35110 / GB-78) protein is Large ribosomal subunit protein uL24.